Reading from the N-terminus, the 492-residue chain is MGSCWSCLDRDSVPHNHPTKFKVTNVDDEGVELGSGVMELTQSELVLHLHQREAVRWPYLCLRRYGYDSNLFSFESGRRCQTGQGIFAFKCSRAEDIFNLLQDLMQCNSINVTEEPVIITRSSHPPELDLPRGPPQPAGYTVSGFSNGFPGCPGEGPRFSSAPRRPSTSSLRHPSPGEESTHTLIASEEQSHTYVNTPTGDEDGRSRHCLQPLPEGRVPLPAQTQGSDQRDPQVLLQPGQVKFVLGPTPARRQVMKCQSLCPGMQDPPHHNNNEGPSECPAQPKCTYENVSGGLQQGAGWRLSPEERGWSGLAHRRAALLHYENLPPLPPVWESQGQQPGGEAGDDGDSRDGLTPSSNGFPDGEEDETPLQKPTSTRASARSHSGFPVPLTRRRGSPRVFNFDFRRQGPEPPRQLNYIQVELKGWGTARPKGPQNPSVSGAPGPTPHPVRSSDSYAVIDLKKTAAMSDLQRALPRDDGAVRKTRHNSTDLPL.

A lipid anchor (N-myristoyl glycine) is attached at Gly-2. The region spanning 13 to 115 (VPHNHPTKFK…QCNSINVTEE (103 aa)) is the IRS-type PTB domain. Disordered regions lie at residues 122–230 (SSHP…SDQR), 328–414 (LPPV…PPRQ), 426–454 (GTAR…SSDS), and 469–492 (LQRA…DLPL). The span at 371 to 382 (QKPTSTRASARS) shows a compositional bias: polar residues.

In terms of assembly, binds NGFR, GRB2, PTPN11 and ERK2. Binds FGFR1 and NTRK1. In terms of processing, phosphorylated on tyrosine residues upon stimulation by BFGF or NGFB. Phosphorylated by ULK2 in vitro.

The protein localises to the membrane. Its function is as follows. Adapter protein that links FGF and NGF receptors to downstream signaling pathways. Involved in the activation of MAP kinases. Down-regulates ERK2 signaling by interfering with the phosphorylation and nuclear translocation of ERK2. This chain is Fibroblast growth factor receptor substrate 3 (Frs3), found in Mus musculus (Mouse).